Reading from the N-terminus, the 142-residue chain is Large ribosomal subunit protein uL13 (142 aa).

Belongs to the universal ribosomal protein uL13 family. In terms of assembly, part of the 50S ribosomal subunit.

In terms of biological role, this protein is one of the early assembly proteins of the 50S ribosomal subunit, although it is not seen to bind rRNA by itself. It is important during the early stages of 50S assembly. The sequence is that of Large ribosomal subunit protein uL13 from Histophilus somni (Haemophilus somnus).